The following is a 213-amino-acid chain: Small ribosomal subunit protein uS5 (213 aa).

An S5 DRBM domain is found at 54–117 (LKSETVDVRL…RNAKLNIIPV (64 aa)).

The protein belongs to the universal ribosomal protein uS5 family. Part of the 30S ribosomal subunit. Contacts protein S4.

Its function is as follows. With S4 and S12 plays an important role in translational accuracy. The sequence is that of Small ribosomal subunit protein uS5 from Hyperthermus butylicus (strain DSM 5456 / JCM 9403 / PLM1-5).